A 1537-amino-acid chain; its full sequence is DNA-directed RNA polymerase subunit beta' (1537 aa).

Zn(2+)-binding residues include C57, C59, C72, and C75. Residues D746, D748, and D750 each coordinate Mg(2+). Zn(2+) is bound by residues C1120, C1201, C1208, and C1211. A disordered region spans residues 1502–1537 (LEKYGQTSVSTDAVTGSQRYDDTRPSSTSINPSYGD). Composition is skewed to polar residues over residues 1506-1519 (GQTSVSTDAVTGSQ) and 1526-1537 (PSSTSINPSYGD).

The protein belongs to the RNA polymerase beta' chain family. In terms of assembly, the RNAP catalytic core consists of 2 alpha, 1 beta, 1 beta' and 1 omega subunit. When a sigma factor is associated with the core the holoenzyme is formed, which can initiate transcription. Requires Mg(2+) as cofactor. Zn(2+) is required as a cofactor.

The catalysed reaction is RNA(n) + a ribonucleoside 5'-triphosphate = RNA(n+1) + diphosphate. In terms of biological role, DNA-dependent RNA polymerase catalyzes the transcription of DNA into RNA using the four ribonucleoside triphosphates as substrates. This is DNA-directed RNA polymerase subunit beta' from Deinococcus geothermalis (strain DSM 11300 / CIP 105573 / AG-3a).